Here is a 110-residue protein sequence, read N- to C-terminus: Small ribosomal subunit protein bS16 (110 aa).

Positions 81 to 104 (VRPAEVLGKQKQEKERSAKKKDAT) are enriched in basic and acidic residues. A disordered region spans residues 81–110 (VRPAEVLGKQKQEKERSAKKKDATASETSE).

This sequence belongs to the bacterial ribosomal protein bS16 family.

This Prochlorococcus marinus (strain NATL1A) protein is Small ribosomal subunit protein bS16.